The chain runs to 77 residues: U11-lycotoxin-Ls1a (77 aa).

Positions 1–20 (MKLIILTGLVLFAIVSLIEA) are cleaved as a signal peptide. Positions 21 to 26 (EEESGR) are excised as a propeptide.

Belongs to the neurotoxin 19 (CSTX) family. 10 (U11-Lctx) subfamily. Post-translationally, contains 4 disulfide bonds. In terms of tissue distribution, expressed by the venom gland.

The protein resides in the secreted. This Lycosa singoriensis (Wolf spider) protein is U11-lycotoxin-Ls1a.